Reading from the N-terminus, the 384-residue chain is Terpene cyclase ascI (384 aa).

The signal sequence occupies residues 1 to 25 (MPQLAGKLILAGLIPLGAWVLHGFA). Residues 82–102 (LSLHAFMFAGQGVPLLVLNML) form a helical membrane-spanning segment. Asn109 is a glycosylation site (N-linked (GlcNAc...) asparagine). Helical transmembrane passes span 119–139 (VFGI…YLFL), 164–184 (AVGF…SLPH), 194–214 (VLSV…AYFA), and 235–255 (GAVY…TFAI). Residue Asn258 is glycosylated (N-linked (GlcNAc...) asparagine). The next 2 membrane-spanning stretches (helical) occupy residues 291–311 (WFLQ…AIGI) and 330–350 (IALR…ALSL). N-linked (GlcNAc...) asparagine glycosylation is present at Asn372.

It belongs to the membrane-bound ascI terpene cyclase family.

Its subcellular location is the membrane. The catalysed reaction is 16-hydroxy-ilicicolin A epoxide = ascofuranol. It participates in secondary metabolite biosynthesis; terpenoid biosynthesis. In terms of biological role, epoxide hydrolase; part of the asc-2 gene cluster that mediates the biosynthesis of ascofuranone, a strong inhibitor of cyanide-insensitive alternative oxidases and a promising drug candidate against African trypanosomiasis. The first step in the pathway is performed by the non-reducing polyketide synthase ascC that produces orsellinic acid by condensing acetyl-CoA with 3 malonyl-CoA units. Orsellinic acid is then prenylated by the prenyltransferase ascA to yield ilicicolinic acid B. Ilicicolinic acid B is further reduced to ilicicolin B by the reductase ascB. The halogenase ascD then chlorinates ilicicolin B to produce ilicicolin A which is converted to ilicicolin A epoxide by the cytochrome P450 monooxygenase ascE that catalyzes stereoselective epoxidation of the terminal double bond of the prenyl group. Ilicicolin A epoxide is the last common precursor for the biosynthesis of ascofuranone and ascochlorin. The terpene cyclase ascF produces a monocyclic terpene, and the cyclization reaction is proposed to be initiated by protonation of the terminal epoxide of ilicicolin A epoxide to generate a monocyclic tertiarycation, which is followed by a series of hydride and methyl shifts with abstraction of proton, leading to the formation of the (14S,15R,19R)-trimethylcyclohexanone ring structure of ilicicolin C, which is finally reduced to ascochlorin by the dehydrogenase ascG. On the other hand, ilicicolin A epoxide is hydroxylated by the cytochrome P450 monooxygenase ascH, and the resultant product is cyclized by the terpene cyclase ascI to ascofuranol via protonation-initiated epoxide ring opening, which facilitates the 6-endo-tet cyclization to form the tetrahy-drofuran ring. Finally, ascofuranol is oxidized into ascofuranone by ascJ. This is Terpene cyclase ascI from Acremonium egyptiacum (Oospora egyptiaca).